Reading from the N-terminus, the 348-residue chain is tRNA N6-adenosine threonylcarbamoyltransferase (348 aa).

Positions 111 and 115 each coordinate Fe cation. Substrate contacts are provided by residues 134 to 138, aspartate 167, glycine 180, aspartate 184, and asparagine 280; that span reads LVSGG. Fe cation is bound at residue aspartate 308.

Belongs to the KAE1 / TsaD family. Fe(2+) serves as cofactor.

Its subcellular location is the cytoplasm. The catalysed reaction is L-threonylcarbamoyladenylate + adenosine(37) in tRNA = N(6)-L-threonylcarbamoyladenosine(37) in tRNA + AMP + H(+). Required for the formation of a threonylcarbamoyl group on adenosine at position 37 (t(6)A37) in tRNAs that read codons beginning with adenine. Is involved in the transfer of the threonylcarbamoyl moiety of threonylcarbamoyl-AMP (TC-AMP) to the N6 group of A37, together with TsaE and TsaB. TsaD likely plays a direct catalytic role in this reaction. This chain is tRNA N6-adenosine threonylcarbamoyltransferase, found in Rippkaea orientalis (strain PCC 8801 / RF-1) (Cyanothece sp. (strain PCC 8801)).